We begin with the raw amino-acid sequence, 192 residues long: Epoxyqueuosine reductase QueH (192 aa).

4 residues coordinate [4Fe-4S] cluster: cysteine 9, cysteine 10, cysteine 87, and cysteine 90. Cysteine 169 and cysteine 171 form a disulfide bridge.

This sequence belongs to the QueH family.

It carries out the reaction epoxyqueuosine(34) in tRNA + AH2 = queuosine(34) in tRNA + A + H2O. Its pathway is tRNA modification; tRNA-queuosine biosynthesis. Catalyzes the conversion of epoxyqueuosine (oQ) to queuosine (Q), which is a hypermodified base found in the wobble positions of tRNA(Asp), tRNA(Asn), tRNA(His) and tRNA(Tyr). The sequence is that of Epoxyqueuosine reductase QueH from Thermotoga maritima (strain ATCC 43589 / DSM 3109 / JCM 10099 / NBRC 100826 / MSB8).